A 436-amino-acid polypeptide reads, in one-letter code: Serine/threonine-protein kinase STK11 (436 aa).

Ser31 is subject to Phosphoserine. An N6-acetyllysine mark is found at Lys44 and Lys48. The tract at residues Leu45–Asn90 is sufficient for interaction with SIRT1. Residues Tyr49 to Phe309 enclose the Protein kinase domain. ATP is bound by residues Leu55–Val63 and Lys78. Lys96 and Lys97 each carry N6-acetyllysine. Asp176 (proton acceptor) is an active-site residue. Thr189 carries the phosphothreonine; by autocatalysis modification. Lys296 and Lys311 each carry N6-acetyllysine. Ser325 is modified (phosphoserine). Residue Thr336 is modified to Phosphothreonine; by autocatalysis. Thr366 carries the post-translational modification Phosphothreonine; by ATM and autocatalysis. The tract at residues Gly397–Val421 is disordered. Ser403 bears the Phosphoserine mark. Position 420 is an N6-acetyllysine (Lys420). Cys422 is lipidated: S-palmitoyl cysteine. Lys426 bears the N6-acetyllysine mark. The residue at position 431 (Ser431) is a Phosphoserine; by autocatalysis, PKA, PKC/PRKCZ and RPS6KA1. Cys433 is subject to Cysteine methyl ester. Cys433 carries the S-farnesyl cysteine lipid modification. Residue Lys434 is modified to N6-acetyllysine. Residues Lys434 to Gln436 constitute a propeptide, removed in mature form.

This sequence belongs to the protein kinase superfamily. CAMK Ser/Thr protein kinase family. LKB1 subfamily. In terms of assembly, catalytic component of a trimeric complex composed of STK11/LKB1, STRAD (STRADA or STRADB) and CAB39/MO25 (CAB39/MO25alpha or CAB39L/MO25beta): the complex tethers STK11/LKB1 in the cytoplasm and stimulates its catalytic activity. Found in a ternary complex composed of SMAD4, STK11/LKB1 and STK11IP. Interacts with NR4A1, p53/TP53, SMAD4, STK11IP and WDR6. Interacts with NISCH; this interaction may increase STK11 activity. Interacts with SIRT1; the interaction deacetylates STK11. Interacts with CDKN1A. Mg(2+) serves as cofactor. The cofactor is Mn(2+). Post-translationally, phosphorylated by ATM at Thr-366 following ionizing radiation (IR). Phosphorylation at Ser-431 by RPS6KA1 and/or some PKA is required to inhibit cell growth. Phosphorylation at Ser-431 is also required during neuronal polarization to mediate phosphorylation of BRSK1 and BRSK2. Phosphorylation by PKC/PRKCZ at Ser-397 in isoform 2 promotes metformin (or peroxynitrite)-induced nuclear export of STK11 and activation of AMPK. UV radiation -induced phosphorylation at Thr-366 mediates CDKN1A degradation. Acetylated. Deacetylation at Lys-48 enhances cytoplasmic localization and kinase activity in vitro. In terms of tissue distribution, expressed in brain, heart, testis, skeletal muscle and spleen, and weakly in liver and kidney. Isoform 1 is expressed at highest levels in the brain. Isoform 2 is expressed at highest levels in the testis, primarily in postmitotic developing germ cells (at protein level).

It localises to the nucleus. The protein localises to the cytoplasm. Its subcellular location is the membrane. The protein resides in the mitochondrion. The catalysed reaction is L-seryl-[protein] + ATP = O-phospho-L-seryl-[protein] + ADP + H(+). It catalyses the reaction L-threonyl-[protein] + ATP = O-phospho-L-threonyl-[protein] + ADP + H(+). Its activity is regulated as follows. Activated by forming a complex with STRAD (STRADA or STRADB) and CAB39/MO25 (CAB39/MO25alpha or CAB39L/MO25beta): STRADA (or STRADB)-binding promotes a conformational change of STK11/LKB1 in an active conformation, which is stabilized by CAB39/MO25alpha (or CAB39L/MO25beta) interacting with the STK11/LKB1 activation loop. Sequestration in the nucleus by NR4A1 prevents it from phosphorylating and activating cytoplasmic AMPK. In terms of biological role, tumor suppressor serine/threonine-protein kinase that controls the activity of AMP-activated protein kinase (AMPK) family members, thereby playing a role in various processes such as cell metabolism, cell polarity, apoptosis and DNA damage response. Acts by phosphorylating the T-loop of AMPK family proteins, thus promoting their activity: phosphorylates PRKAA1, PRKAA2, BRSK1, BRSK2, MARK1, MARK2, MARK3, MARK4, NUAK1, NUAK2, SIK1, SIK2, SIK3 and SNRK but not MELK. Also phosphorylates non-AMPK family proteins such as STRADA, PTEN and possibly p53/TP53. Acts as a key upstream regulator of AMPK by mediating phosphorylation and activation of AMPK catalytic subunits PRKAA1 and PRKAA2 and thereby regulates processes including: inhibition of signaling pathways that promote cell growth and proliferation when energy levels are low, glucose homeostasis in liver, activation of autophagy when cells undergo nutrient deprivation, and B-cell differentiation in the germinal center in response to DNA damage. Also acts as a regulator of cellular polarity by remodeling the actin cytoskeleton. Required for cortical neuron polarization by mediating phosphorylation and activation of BRSK1 and BRSK2, leading to axon initiation and specification. Involved in DNA damage response: interacts with p53/TP53 and recruited to the CDKN1A/WAF1 promoter to participate in transcription activation. Able to phosphorylate p53/TP53; the relevance of such result in vivo is however unclear and phosphorylation may be indirect and mediated by downstream STK11/LKB1 kinase NUAK1. Also acts as a mediator of p53/TP53-dependent apoptosis via interaction with p53/TP53: translocates to the mitochondrion during apoptosis and regulates p53/TP53-dependent apoptosis pathways. Regulates UV radiation-induced DNA damage response mediated by CDKN1A. In association with NUAK1, phosphorylates CDKN1A in response to UV radiation and contributes to its degradation which is necessary for optimal DNA repair. Has a role in spermiogenesis. The chain is Serine/threonine-protein kinase STK11 from Rattus norvegicus (Rat).